A 338-amino-acid chain; its full sequence is MSDRLKPLIGTAATRPLSREEAEFAFECLFEGEATPAQMGGLLMALRTRGETVDEYAAAASVMRAKCHKVRAPHGAIDIVGTGGDGKGTLNISTATAFVVAGAGVPVAKHGNRNLSSKSGAADALTEMGLNVMIGPEQVEACLLEAGIGFMMAPMHHPAMRHVGPVRAELGTRTIFNILGPLTNPAGVKRQLTGAFSPDLIRPMAEVLSALGSEKAWLVHGGDGTDELAISAASKVAALEGGQIREFELHPEEAGLPVHPFEEIVGGTPAENAQAFRALLDGAPGAYRDAVLLNAAAALVVADRAAHLREGVEIATDSILSGAAKAKVALLARLTNAA.

5-phospho-alpha-D-ribose 1-diphosphate is bound by residues Gly81, 84–85 (GD), Thr89, 91–94 (NIST), 109–117 (KHGNRNLSS), and Ala121. Residue Gly81 participates in anthranilate binding. Position 93 (Ser93) interacts with Mg(2+). Asn112 serves as a coordination point for anthranilate. Position 167 (Arg167) interacts with anthranilate. Mg(2+)-binding residues include Asp226 and Glu227.

The protein belongs to the anthranilate phosphoribosyltransferase family. Homodimer. Requires Mg(2+) as cofactor.

The catalysed reaction is N-(5-phospho-beta-D-ribosyl)anthranilate + diphosphate = 5-phospho-alpha-D-ribose 1-diphosphate + anthranilate. The protein operates within amino-acid biosynthesis; L-tryptophan biosynthesis; L-tryptophan from chorismate: step 2/5. Functionally, catalyzes the transfer of the phosphoribosyl group of 5-phosphorylribose-1-pyrophosphate (PRPP) to anthranilate to yield N-(5'-phosphoribosyl)-anthranilate (PRA). In Cereibacter sphaeroides (strain ATCC 17023 / DSM 158 / JCM 6121 / CCUG 31486 / LMG 2827 / NBRC 12203 / NCIMB 8253 / ATH 2.4.1.) (Rhodobacter sphaeroides), this protein is Anthranilate phosphoribosyltransferase.